Reading from the N-terminus, the 477-residue chain is Serine/threonine protein phosphatase 2A 55 kDa regulatory subunit B' delta isoform (477 aa).

It belongs to the phosphatase 2A regulatory subunit B56 family. PP2A consists of a common heteromeric enzyme, composed of a catalytic subunit (subunits C), a constant regulatory subunit (subunit A), and a variety of regulatory subunits such as subunits B (the R2/B/PR55/B55, R3/B''/PR72/PR130/PR59 and R5/B'/B56 families). Interacts with SRK2E/OST1. In terms of tissue distribution, expressed ubiquitously.

The protein resides in the cytoplasm. Its function is as follows. The B regulatory subunit may modulate substrate selectivity and catalytic activity, and may also direct the localization of the catalytic enzyme to a particular subcellular compartment. The chain is Serine/threonine protein phosphatase 2A 55 kDa regulatory subunit B' delta isoform (B'DELTA) from Arabidopsis thaliana (Mouse-ear cress).